Here is a 199-residue protein sequence, read N- to C-terminus: Imidazoleglycerol-phosphate dehydratase (199 aa).

It belongs to the imidazoleglycerol-phosphate dehydratase family.

It localises to the cytoplasm. It carries out the reaction D-erythro-1-(imidazol-4-yl)glycerol 3-phosphate = 3-(imidazol-4-yl)-2-oxopropyl phosphate + H2O. It participates in amino-acid biosynthesis; L-histidine biosynthesis; L-histidine from 5-phospho-alpha-D-ribose 1-diphosphate: step 6/9. This is Imidazoleglycerol-phosphate dehydratase from Acidithiobacillus ferrooxidans (strain ATCC 53993 / BNL-5-31) (Leptospirillum ferrooxidans (ATCC 53993)).